The primary structure comprises 241 residues: UDP-2,3-diacylglucosamine hydrolase (241 aa).

Mn(2+)-binding residues include Asp8, His10, Asp41, Asn79, and His114. 79-80 (NR) contributes to the substrate binding site. The substrate site is built by Asp122, Lys164, Lys167, and His195. Positions 195 and 197 each coordinate Mn(2+).

The protein belongs to the LpxH family. Mn(2+) serves as cofactor.

The protein resides in the cell inner membrane. It catalyses the reaction UDP-2-N,3-O-bis[(3R)-3-hydroxytetradecanoyl]-alpha-D-glucosamine + H2O = 2-N,3-O-bis[(3R)-3-hydroxytetradecanoyl]-alpha-D-glucosaminyl 1-phosphate + UMP + 2 H(+). It participates in glycolipid biosynthesis; lipid IV(A) biosynthesis; lipid IV(A) from (3R)-3-hydroxytetradecanoyl-[acyl-carrier-protein] and UDP-N-acetyl-alpha-D-glucosamine: step 4/6. Functionally, hydrolyzes the pyrophosphate bond of UDP-2,3-diacylglucosamine to yield 2,3-diacylglucosamine 1-phosphate (lipid X) and UMP by catalyzing the attack of water at the alpha-P atom. Involved in the biosynthesis of lipid A, a phosphorylated glycolipid that anchors the lipopolysaccharide to the outer membrane of the cell. In Aliivibrio fischeri (strain MJ11) (Vibrio fischeri), this protein is UDP-2,3-diacylglucosamine hydrolase.